The primary structure comprises 205 residues: SREBP regulating gene protein (205 aa).

Topologically, residues Met1–Arg16 are cytoplasmic. The chain crosses the membrane as a helical span at residues Trp17–Phe35. The Lumenal portion of the chain corresponds to Lys36–Ala205. Residue Asn67 is glycosylated (N-linked (GlcNAc...) asparagine).

The protein belongs to the SPRING family. As to quaternary structure, interacts with SCAP.

The protein localises to the golgi apparatus membrane. Functionally, positively regulates hepatic SREBP signaling pathway by modulating the proper localization of SCAP (SREBP cleavage-activating protein) to the endoplasmic reticulum, thereby controlling the level of functional SCAP. In Homo sapiens (Human), this protein is SREBP regulating gene protein.